We begin with the raw amino-acid sequence, 917 residues long: MDYKETLLMPKTDFPMRGGLPNKEPQIQEKWDAEDQYHKALEKNKGNETFILHDGPPYANGNLHMGHALNKILKDFIVRYKTMQGFYAPYVPGWDTHGLPIEQALTKKGVDRKKMSTAEFREKCKEFALEQIELQKKDFRRLGVRGDFNDPYITLKPEYEAAQIRIFGEMADKGLIYKGKKPVYWSPSSESSLAEAEIEYHDKRSASIYVAFNVKDDKGVVDADAKFIIWTTTPWTIPSNVAITVHPELKYGQYNVNGEKYIIAEALSDAVAEALDWDKASIKLEKEYTGKELEYVVAQHPFLDRESLVINGDHVTTDAGTGCVHTAPGHGEDDYIVGQKYELPVISPIDDKGVFTEEGGQFEGMFYDKANKAVTDLLTEKGALLKLDFITHSYPHDWRTKKPVIFRATPQWFASISKVRQDILDAIENTNFKVNWGKTRIYNMVRDRGEWVISRQRVWGVPLPVFYAENGEIIMTKETVNHVADLFAEHGSNIWFEREAKDLLPEGFTHPGSPNGTFTKETDIMDVWFDSGSSHRGVLETRPELSFPADMYLEGSDQYRGWFNSSITTSVATRGVSPYKFLLSHGFVMDGEGKKMSKSLGNVIVPDQVVKQKGADIARLWVSSTDYLADVRISDEILKQTSDVYRKIRNTLRFMLGNINDFNPDTDSIPESELLEVDRYLLNRLREFTASTINNYENFDYLNIYQEVQNFINVELSNFYLDYGKDILYIEQRDSHIRRSMQTVLYQILVDMTKLLAPILVHTAEEVWSHTPHVKEESVHLADMPKVVEVDQALLDKWRTFMNLRDDVNRALETARNEKVIGKSLEAKVTIASNDKFNASEFLTSFDALHQLFIVSQVKVVDKLDDQATAYEHGDIVIEHADGEKCERCWNYSEDLGAVDELTHLCPRCQQVVKSLV.

Pro-56, His-67, Glu-554, Gly-555, Asp-557, Gln-558, and His-585 together coordinate L-isoleucyl-5'-AMP. The short motif at 57 to 67 (PYANGNLHMGH) is the 'HIGH' region element. The 'KMSKS' region motif lies at 595 to 599 (KMSKS). Position 598 (Lys-598) interacts with ATP. Residues Arg-632 and Gln-640 each contribute to the tRNA(Ile) site. Zn(2+) contacts are provided by Cys-886, Cys-889, Cys-906, and Cys-909.

This sequence belongs to the class-I aminoacyl-tRNA synthetase family. IleS type 1 subfamily. In terms of assembly, monomer. Zn(2+) serves as cofactor.

The protein resides in the cytoplasm. The enzyme catalyses tRNA(Ile) + L-isoleucine + ATP = L-isoleucyl-tRNA(Ile) + AMP + diphosphate. Functionally, catalyzes the attachment of isoleucine to tRNA(Ile). As IleRS can inadvertently accommodate and process structurally similar amino acids such as valine, to avoid such errors it has two additional distinct tRNA(Ile)-dependent editing activities. One activity is designated as 'pretransfer' editing and involves the hydrolysis of activated Val-AMP. The other activity is designated 'posttransfer' editing and involves deacylation of mischarged Val-tRNA(Ile). The chain is Isoleucine--tRNA ligase (ileS) from Staphylococcus aureus.